The following is a 312-amino-acid chain: Ribosomal RNA small subunit methyltransferase H (312 aa).

S-adenosyl-L-methionine-binding positions include 35–37 (GGH), Asp-55, Phe-79, Asp-100, and Gln-107.

The protein belongs to the methyltransferase superfamily. RsmH family.

Its subcellular location is the cytoplasm. It catalyses the reaction cytidine(1402) in 16S rRNA + S-adenosyl-L-methionine = N(4)-methylcytidine(1402) in 16S rRNA + S-adenosyl-L-homocysteine + H(+). Functionally, specifically methylates the N4 position of cytidine in position 1402 (C1402) of 16S rRNA. The protein is Ribosomal RNA small subunit methyltransferase H of Azoarcus sp. (strain BH72).